The chain runs to 212 residues: Large ribosomal subunit protein uL3 (212 aa).

A disordered region spans residues 130 to 158; it reads KRGSMTHGSKNHRLPGSTGAGTTPGRVYP.

This sequence belongs to the universal ribosomal protein uL3 family. In terms of assembly, part of the 50S ribosomal subunit. Forms a cluster with proteins L14 and L19.

One of the primary rRNA binding proteins, it binds directly near the 3'-end of the 23S rRNA, where it nucleates assembly of the 50S subunit. The sequence is that of Large ribosomal subunit protein uL3 from Gloeothece citriformis (strain PCC 7424) (Cyanothece sp. (strain PCC 7424)).